The sequence spans 160 residues: Cytochrome b6-f complex subunit 4 (160 aa).

Transmembrane regions (helical) follow at residues Leu36–Val56, Leu95–Glu115, and Thr131–Ile151.

The protein belongs to the cytochrome b family. PetD subfamily. As to quaternary structure, the 4 large subunits of the cytochrome b6-f complex are cytochrome b6, subunit IV (17 kDa polypeptide, petD), cytochrome f and the Rieske protein, while the 4 small subunits are petG, petL, petM and petN. The complex functions as a dimer.

The protein resides in the plastid. The protein localises to the chloroplast thylakoid membrane. Its function is as follows. Component of the cytochrome b6-f complex, which mediates electron transfer between photosystem II (PSII) and photosystem I (PSI), cyclic electron flow around PSI, and state transitions. This is Cytochrome b6-f complex subunit 4 from Coffea arabica (Arabian coffee).